The following is an 88-amino-acid chain: Small ribosomal subunit protein bS20 (88 aa).

The interval M1–M27 is disordered.

The protein belongs to the bacterial ribosomal protein bS20 family.

Functionally, binds directly to 16S ribosomal RNA. This Shewanella frigidimarina (strain NCIMB 400) protein is Small ribosomal subunit protein bS20.